We begin with the raw amino-acid sequence, 408 residues long: Imidazolonepropionase (408 aa).

Fe(3+) is bound by residues His73 and His75. Zn(2+)-binding residues include His73 and His75. Positions 82, 145, and 178 each coordinate 4-imidazolone-5-propanoate. Residue Tyr145 participates in N-formimidoyl-L-glutamate binding. Position 243 (His243) interacts with Fe(3+). His243 contacts Zn(2+). Gln246 contributes to the 4-imidazolone-5-propanoate binding site. Asp318 is a binding site for Fe(3+). A Zn(2+)-binding site is contributed by Asp318. The N-formimidoyl-L-glutamate site is built by Asn320 and Gly322. Residue Ser323 participates in 4-imidazolone-5-propanoate binding.

The protein belongs to the metallo-dependent hydrolases superfamily. HutI family. Zn(2+) serves as cofactor. It depends on Fe(3+) as a cofactor.

It localises to the cytoplasm. The enzyme catalyses 4-imidazolone-5-propanoate + H2O = N-formimidoyl-L-glutamate. The protein operates within amino-acid degradation; L-histidine degradation into L-glutamate; N-formimidoyl-L-glutamate from L-histidine: step 3/3. Functionally, catalyzes the hydrolytic cleavage of the carbon-nitrogen bond in imidazolone-5-propanoate to yield N-formimidoyl-L-glutamate. It is the third step in the universal histidine degradation pathway. This chain is Imidazolonepropionase, found in Shewanella loihica (strain ATCC BAA-1088 / PV-4).